Consider the following 382-residue polypeptide: Sphingoid long-chain base transporter RSB1 (382 aa).

The Extracellular portion of the chain corresponds to 1 to 34 (MSNATNNTLGSLLPQLEAAANSNSLYGGMVPNLR). Asn3 and Asn6 each carry an N-linked (GlcNAc...) asparagine glycan. The helical transmembrane segment at 35 to 55 (FNITMIVIWGILLTIHVVQLL) threads the bilayer. Residues 56–57 (MR) lie on the Cytoplasmic side of the membrane. Residues 58–78 (QYWFSIAFICTGILEVLGFIG) traverse the membrane as a helical segment. The Extracellular portion of the chain corresponds to 79–90 (RTWSHSNVADMD). Residues 91-111 (AFLLNMICLTIAPVFTMGGIY) form a helical membrane-spanning segment. Residues 112–135 (YQLAKLIEVYGHRFSLLPSPMAYS) are Cytoplasmic-facing. Residues 136-156 (FIFICSDIVSLVVQAVGGGLC) traverse the membrane as a helical segment. The Extracellular segment spans residues 157–171 (GVAVTDGTSTTTGNH). Residues 172 to 192 (VFIAGLAIQVASMAIFLMLWF) traverse the membrane as a helical segment. Residues 193-241 (HFLFRIYISVRWEHINSRPISLSLLKISQTEVDYLYREKFHFLRLEPKR) lie on the Cytoplasmic side of the membrane. The chain crosses the membrane as a helical span at residues 242–262 (WVFHYFNLAITVAVLTIFTRC). At 263-281 (CYRLAELVVGWDGYLITHE) the chain is on the extracellular side. A helical membrane pass occupies residues 282 to 302 (WYFIILDALMMAIATVTLTIF). Residues 303–382 (HPGFAFKGRS…LFSSKKKAKL (80 aa)) lie on the Cytoplasmic side of the membrane.

It belongs to the lipid-translocating exporter (LTE) (TC 9.A.26.1) family.

The protein resides in the cell membrane. Its function is as follows. Catalyzes the ATP-dependent translocation of sphingoid long-chain bases (LCBs) from the cytoplasmic site toward the extracytoplasmic side of the membrane (flip-flop). Involved in the establishment of the functional lipid asymmetry of the plasma membrane. Regulates intracellular levels of LCBs, sphingolipid precursors that are growth inhibitory at increased levels. The chain is Sphingoid long-chain base transporter RSB1 (RSB1) from Saccharomyces cerevisiae (strain ATCC 204508 / S288c) (Baker's yeast).